A 324-amino-acid chain; its full sequence is NADH-ubiquinone oxidoreductase chain 1 (324 aa).

8 helical membrane passes run 9 to 29 (LINPLAYIVPVLLAVAFLTLI), 75 to 95 (FLFLAAPVLALTLAMTLWAPM), 106 to 126 (LGILFILALSSLAVYSILGSG), 146 to 166 (ISYEVSLGLILLSVIIFSGGY), 177 to 197 (SIWLLIPAWPLAAMWYISTLA), 228 to 248 (LFFLAEYANILLMNTLSAVLF), 259 to 279 (ELTTINLMTKAALLSILFLWV), and 299 to 319 (FLPLTLAFVLWHTALPIALAG).

Belongs to the complex I subunit 1 family.

It localises to the mitochondrion inner membrane. The catalysed reaction is a ubiquinone + NADH + 5 H(+)(in) = a ubiquinol + NAD(+) + 4 H(+)(out). Core subunit of the mitochondrial membrane respiratory chain NADH dehydrogenase (Complex I) that is believed to belong to the minimal assembly required for catalysis. Complex I functions in the transfer of electrons from NADH to the respiratory chain. The immediate electron acceptor for the enzyme is believed to be ubiquinone. The chain is NADH-ubiquinone oxidoreductase chain 1 (MT-ND1) from Carassius auratus (Goldfish).